A 161-amino-acid chain; its full sequence is Endoribonuclease YbeY (161 aa).

Zn(2+) is bound by residues H120, H124, and D130.

It belongs to the endoribonuclease YbeY family. It depends on Zn(2+) as a cofactor.

Its subcellular location is the cytoplasm. In terms of biological role, single strand-specific metallo-endoribonuclease involved in late-stage 70S ribosome quality control and in maturation of the 3' terminus of the 16S rRNA. The chain is Endoribonuclease YbeY from Chlamydia muridarum (strain MoPn / Nigg).